The chain runs to 764 residues: MVTTHNLGFPRIGAKRELKFGLERYWKGESSRDELKALGAELRRRHWHDQRDLDLAPLGDFAFYDQVLDMSFTLGNLPKRVQDFHGDALDNYFRVARGRSAQSAEEHAACCGGVAAGEMTKWFDTNYHYIVPEFHADTNFSLDPSRLLQQLAEANAQGVNAKPVILGPVTYLWLGKAKDVSDRLALLPKLLPVYGALLDTLTAQGVEWVQIDEPILVTELDAEWRQAFRTAYAALETRRIKLLLATYFGQLQDNLTLAASLPVDGLHIDAINARDEVDALVRELPAERVLSVGAINGRNIWKTDLNAALDWLEPLAKQLGDRLWLAPSCSLLHVPVDLASEEKLDAEIRSWLAFALQKLDELKVLATALNEGRDKVADALAANAAAIDSRRRSPRVNNPVVKAAIARIDAQLGNRASPYTQRASKQSARLNLPAFPTTTIGSFPQTAEIRQARSRFRAGALDEAGYRTAMRAEIERSVREQESLELDVLVHGEAERNDMVEYFGEQLDGYAFSQFGWVQSYGSRCVKPPILFGDISRPKAMTVEWIAYAQSLTRKPMKGMLTGPVTILNWSFVRDDQPRAVSCYQLALAIREEVLDLEKAGVRVIQIDEAALREGLPLRRAQWSEYLKWAVESFRITANGVQDDTQIHTHMCYSEFNDIIASIADMDADVITIETSRSDMELLDAFDTFKYPNEIGPGVYDIHSPNIPTQDHIVGLMKKAAERIPAERLWVNPDCGLKTRQWAEVIPALTNMVAAAKTLRNQVQ.

5-methyltetrahydropteroyltri-L-glutamate is bound by residues 16 to 19 (RELK) and lysine 121. Residues 440-442 (IGS) and glutamate 493 each bind L-homocysteine. Residues 440-442 (IGS) and glutamate 493 contribute to the L-methionine site. 5-methyltetrahydropteroyltri-L-glutamate contacts are provided by residues 524 to 525 (RC) and tryptophan 570. Aspartate 608 is a binding site for L-homocysteine. L-methionine is bound at residue aspartate 608. Glutamate 614 serves as a coordination point for 5-methyltetrahydropteroyltri-L-glutamate. 3 residues coordinate Zn(2+): histidine 650, cysteine 652, and glutamate 674. Residue histidine 703 is the Proton donor of the active site. Cysteine 735 is a Zn(2+) binding site.

The protein belongs to the vitamin-B12 independent methionine synthase family. The cofactor is Zn(2+).

It catalyses the reaction 5-methyltetrahydropteroyltri-L-glutamate + L-homocysteine = tetrahydropteroyltri-L-glutamate + L-methionine. The protein operates within amino-acid biosynthesis; L-methionine biosynthesis via de novo pathway; L-methionine from L-homocysteine (MetE route): step 1/1. Its function is as follows. Catalyzes the transfer of a methyl group from 5-methyltetrahydrofolate to homocysteine resulting in methionine formation. The protein is 5-methyltetrahydropteroyltriglutamate--homocysteine methyltransferase of Burkholderia cenocepacia (strain HI2424).